The following is a 247-amino-acid chain: ATP synthase subunit C lysine N-methyltransferase (247 aa).

Residue methionine 1 is modified to N-acetylmethionine. A compositionally biased stretch (basic and acidic residues) spans 1–12 (MERVGTPEEERQ). Residues 1–25 (MERVGTPEEERQAGPVLPTSLESDS) form a disordered region. Residues 34-54 (LITGVVGGALLTVYAVATPFI) form a helical membrane-spanning segment. The interval 51–85 (TPFITPALRKVCLPFVPATSKQVENVVRMLRHRRG) is required for mitochondrial location. Positions 209 to 247 (QRGRGGRPNQEWVGQKNLSETAGLQASSSETRSKLLDVE) are disordered. Residues 224 to 238 (KNLSETAGLQASSSE) are compositionally biased toward polar residues.

This sequence belongs to the ANT/ATPSC lysine N-methyltransferase family. As to expression, ubiquitously expressed.

The protein resides in the mitochondrion membrane. It catalyses the reaction L-lysyl-[protein] + 3 S-adenosyl-L-methionine = N(6),N(6),N(6)-trimethyl-L-lysyl-[protein] + 3 S-adenosyl-L-homocysteine + 3 H(+). In terms of biological role, mitochondrial protein-lysine N-methyltransferase that trimethylates ATP synthase subunit C, ATP5MC1 and ATP5MC2. Trimethylation is required for proper incorporation of the C subunit into the ATP synthase complex and mitochondrial respiration. Promotes chronic pain. Involved in persistent inflammatory and neuropathic pain: methyltransferase activity in the mitochondria of sensory neurons promotes chronic pain via a pathway that depends on the production of reactive oxygen species (ROS) and on the engagement of spinal cord microglia. This chain is ATP synthase subunit C lysine N-methyltransferase, found in Mus musculus (Mouse).